We begin with the raw amino-acid sequence, 494 residues long: Protein DETOXIFICATION 23 (494 aa).

The interval M1–D25 is disordered. The next 12 membrane-spanning stretches (helical) occupy residues L40 to I60, A74 to M94, I123 to L143, I158 to M178, I188 to V208, L223 to T243, G268 to L288, A297 to A317, M340 to L360, L384 to G404, L416 to L436, and V441 to M461.

This sequence belongs to the multi antimicrobial extrusion (MATE) (TC 2.A.66.1) family.

It is found in the membrane. This Arabidopsis thaliana (Mouse-ear cress) protein is Protein DETOXIFICATION 23.